A 472-amino-acid polypeptide reads, in one-letter code: Radical SAM cyclopropyl synthase TigE (472 aa).

A Radical SAM core domain is found at 106–331 (GEQIKAIQLV…VIDLYEYGLD (226 aa)). 11 residues coordinate [4Fe-4S] cluster: Cys-120, Cys-124, Cys-127, Tyr-339, Cys-360, Cys-378, Cys-414, Cys-417, Cys-423, Cys-427, and Cys-446.

It belongs to the radical SAM superfamily. [4Fe-4S] cluster serves as cofactor.

It carries out the reaction L-isoleucyl-[protein] + AH2 + 2 S-adenosyl-L-methionine = methylcyclopropylglycine-[protein] + 2 5'-deoxyadenosine + 2 L-methionine + A + 2 H(+). Its function is as follows. Radical S-adenosylmethionine (SAM) enzyme that catalyzes the formation of methylcyclopropylglycine (mCPG) residues from isoleucine residues residing in the repeating TIGSVS motif of the precursor peptide TigB. Is thus involved in the maturation of a ribosomally synthesized and post-translationally modified peptide (RiPP). The sequence is that of Radical SAM cyclopropyl synthase TigE from Paramaledivibacter caminithermalis (strain DSM 15212 / CIP 107654 / DViRD3) (Clostridium caminithermale).